Here is a 699-residue protein sequence, read N- to C-terminus: Elongation factor G (699 aa).

The 283-residue stretch at 8–290 (NKYRNLGIMA…KVIELLPSPV (283 aa)) folds into the tr-type G domain. Residues 17–24 (AHIDAGKT), 88–92 (DTPGH), and 142–145 (NKMD) each bind GTP.

It belongs to the TRAFAC class translation factor GTPase superfamily. Classic translation factor GTPase family. EF-G/EF-2 subfamily.

The protein localises to the cytoplasm. Catalyzes the GTP-dependent ribosomal translocation step during translation elongation. During this step, the ribosome changes from the pre-translocational (PRE) to the post-translocational (POST) state as the newly formed A-site-bound peptidyl-tRNA and P-site-bound deacylated tRNA move to the P and E sites, respectively. Catalyzes the coordinated movement of the two tRNA molecules, the mRNA and conformational changes in the ribosome. This chain is Elongation factor G, found in Dichelobacter nodosus (strain VCS1703A).